A 294-amino-acid chain; its full sequence is Cytidine deaminase (294 aa).

CMP/dCMP-type deaminase domains are found at residues 48–168 (DDDA…FGPR) and 186–294 (LKGD…VTLA). Position 89–91 (89–91 (NME)) interacts with substrate. Position 102 (histidine 102) interacts with Zn(2+). Glutamate 104 acts as the Proton donor in catalysis. The Zn(2+) site is built by cysteine 129 and cysteine 132.

This sequence belongs to the cytidine and deoxycytidylate deaminase family. In terms of assembly, homodimer. It depends on Zn(2+) as a cofactor.

It catalyses the reaction cytidine + H2O + H(+) = uridine + NH4(+). It carries out the reaction 2'-deoxycytidine + H2O + H(+) = 2'-deoxyuridine + NH4(+). Its function is as follows. This enzyme scavenges exogenous and endogenous cytidine and 2'-deoxycytidine for UMP synthesis. The polypeptide is Cytidine deaminase (Cronobacter sakazakii (strain ATCC BAA-894) (Enterobacter sakazakii)).